Here is a 66-residue protein sequence, read N- to C-terminus: UPF0457 protein BA_2525/GBAA_2525/BAS2348 (66 aa).

This sequence belongs to the UPF0457 family.

The polypeptide is UPF0457 protein BA_2525/GBAA_2525/BAS2348 (Bacillus anthracis).